Reading from the N-terminus, the 109-residue chain is U3-lycotoxin-Ls1x (109 aa).

The N-terminal stretch at 1–20 is a signal peptide; that stretch reads MKFVLLFGVLLVTLFSYSSA. The propeptide occupies 21–44; it reads EMLDDFDQADEDELLSLIEKEEAR. 4 disulfides stabilise this stretch: Cys48/Cys63, Cys55/Cys72, Cys62/Cys88, and Cys74/Cys86.

It belongs to the neurotoxin 19 (CSTX) family. 01 subfamily. Expressed by the venom gland.

The protein resides in the secreted. The chain is U3-lycotoxin-Ls1x from Lycosa singoriensis (Wolf spider).